Here is a 574-residue protein sequence, read N- to C-terminus: Glycine--tRNA ligase (574 aa).

Residues R96 and E162 each contribute to the substrate site. ATP contacts are provided by residues 194 to 196, 204 to 209, 327 to 328, and 450 to 453; these read RNE, IRLREF, EC, and GIDR. A substrate-binding site is contributed by 209–213; sequence FTQAE. A substrate-binding site is contributed by 446-450; the sequence is EPSYG.

This sequence belongs to the class-II aminoacyl-tRNA synthetase family.

The protein resides in the cytoplasm. The enzyme catalyses tRNA(Gly) + glycine + ATP = glycyl-tRNA(Gly) + AMP + diphosphate. Catalyzes the attachment of glycine to tRNA(Gly). This Methanococcus vannielii (strain ATCC 35089 / DSM 1224 / JCM 13029 / OCM 148 / SB) protein is Glycine--tRNA ligase.